The chain runs to 372 residues: Glutamate 5-kinase (372 aa).

Lysine 14 is a binding site for ATP. Residues serine 54, aspartate 141, and asparagine 153 each coordinate substrate. 173 to 174 contacts ATP; that stretch reads TD. Positions 280–358 constitute a PUA domain; the sequence is RGHVVIDDGA…GEIESVLGYM (79 aa).

The protein belongs to the glutamate 5-kinase family.

It is found in the cytoplasm. The catalysed reaction is L-glutamate + ATP = L-glutamyl 5-phosphate + ADP. The protein operates within amino-acid biosynthesis; L-proline biosynthesis; L-glutamate 5-semialdehyde from L-glutamate: step 1/2. In terms of biological role, catalyzes the transfer of a phosphate group to glutamate to form L-glutamate 5-phosphate. The polypeptide is Glutamate 5-kinase (Paraburkholderia phymatum (strain DSM 17167 / CIP 108236 / LMG 21445 / STM815) (Burkholderia phymatum)).